A 147-amino-acid polypeptide reads, in one-letter code: Large ribosomal subunit protein uL15 (147 aa).

Positions 1–42 (MTIKVHHLRPAPGAKTTKTRVGRGEGSKGKTAGRGTKGSKAR) are disordered.

It belongs to the universal ribosomal protein uL15 family. As to quaternary structure, part of the 50S ribosomal subunit.

Functionally, binds to the 23S rRNA. The polypeptide is Large ribosomal subunit protein uL15 (Salinispora tropica (strain ATCC BAA-916 / DSM 44818 / JCM 13857 / NBRC 105044 / CNB-440)).